The following is a 600-amino-acid chain: UvrABC system protein C (600 aa).

Positions 15 to 100 constitute a GIY-YIG domain; it reads NSAGVYQYFN…IKQLHPKYNI (86 aa). The 36-residue stretch at 203 to 238 folds into the UVR domain; that stretch reads SILIKNLEKQMLVLAQNENYEEAAKVRDQIVTIKDL.

It belongs to the UvrC family. In terms of assembly, interacts with UvrB in an incision complex.

Its subcellular location is the cytoplasm. Its function is as follows. The UvrABC repair system catalyzes the recognition and processing of DNA lesions. UvrC both incises the 5' and 3' sides of the lesion. The N-terminal half is responsible for the 3' incision and the C-terminal half is responsible for the 5' incision. The chain is UvrABC system protein C from Campylobacter jejuni subsp. jejuni serotype O:6 (strain 81116 / NCTC 11828).